Here is a 1171-residue protein sequence, read N- to C-terminus: Protein WWC2 (1171 aa).

WW domains follow at residues 9–42 (LPLP…DPRD) and 56–89 (NELP…DPRK). 3 coiled-coil regions span residues 120–193 (KEQR…YKEQ), 223–257 (ELKS…LEEA), and 301–420 (LAEK…KSAT). 2 disordered regions span residues 521–552 (SPTA…LSPP) and 603–637 (QALA…KNPD). Residues 534 to 551 (PKSVTSLSSLSSLSSLSP) show a composition bias toward low complexity. 2 stretches are compositionally biased toward basic and acidic residues: residues 606–616 (AERKSTGEGLR) and 625–637 (GRTD…KNPD). One can recognise a C2 domain in the interval 684 to 806 (GAAQAQLILR…FSNDVHTQWY (123 aa)). Coiled coils occupy residues 836-870 (LDLD…EQLC) and 1047-1123 (DLEL…NAEK).

It belongs to the WWC family.

The protein localises to the cytoplasm. It is found in the cytosol. Its function is as follows. Negative regulator of the Hippo signaling pathway, also known as the Salvador-Warts-Hippo (SWH) pathway. This chain is Protein WWC2 (wwc2), found in Xenopus tropicalis (Western clawed frog).